The following is a 173-amino-acid chain: MSSARSPYLRFGLIFAAVAFLLDQVTKWIVTVPLSLEPKGQIELTSFFNLTWAENCGISLSMFASCTDTTRWTLVAVTGIVAAAVAFWMTREQAKGDVIALALILGGALGNIVDRVRFGYVVDFADLHIGDFRPFMIFNVADACITIGVLLLVARALLLGEKAGQADAKPSVD.

The next 3 helical transmembrane spans lie at 11–31, 69–89, and 93–113; these read FGLI…WIVT, TTRW…AFWM, and QAKG…GNIV. Active-site residues include Asp-123 and Asp-142. Residues 134-154 traverse the membrane as a helical segment; that stretch reads PFMIFNVADACITIGVLLLVA.

It belongs to the peptidase A8 family.

The protein localises to the cell inner membrane. The catalysed reaction is Release of signal peptides from bacterial membrane prolipoproteins. Hydrolyzes -Xaa-Yaa-Zaa-|-(S,diacylglyceryl)Cys-, in which Xaa is hydrophobic (preferably Leu), and Yaa (Ala or Ser) and Zaa (Gly or Ala) have small, neutral side chains.. It participates in protein modification; lipoprotein biosynthesis (signal peptide cleavage). In terms of biological role, this protein specifically catalyzes the removal of signal peptides from prolipoproteins. The sequence is that of Lipoprotein signal peptidase from Sphingopyxis alaskensis (strain DSM 13593 / LMG 18877 / RB2256) (Sphingomonas alaskensis).